A 297-amino-acid chain; its full sequence is uncharacterized protein (297 aa).

Residues Arg-128–Phe-156 are a coiled coil.

This is an uncharacterized protein from Bacillus subtilis (strain 168).